The following is a 369-amino-acid chain: Probable N-acetyltransferase 16 (369 aa).

The disordered stretch occupies residues 1–49 (MKLEASCGTATSEVPKPEKKTARDAEPSSETRPQEVEAEPRSGSGPEAE). Over residues 15-26 (PKPEKKTARDAE) the composition is skewed to basic and acidic residues. Residues 53-188 (LDFVVATERE…QGILLVRFNA (136 aa)) form the N-acetyltransferase domain.

Its function is as follows. Probable N-acetyltransferase. Shows only trace activity toward L-His and no N-acetyltransferase activity toward other amino acids. The physiological substrate of this enzyme is unknown. This is Probable N-acetyltransferase 16 (NAT16) from Homo sapiens (Human).